A 271-amino-acid chain; its full sequence is Acyl-[acyl-carrier-protein]--UDP-N-acetylglucosamine O-acyltransferase (271 aa).

This sequence belongs to the transferase hexapeptide repeat family. LpxA subfamily. Homotrimer.

The protein resides in the cytoplasm. The catalysed reaction is a (3R)-hydroxyacyl-[ACP] + UDP-N-acetyl-alpha-D-glucosamine = a UDP-3-O-[(3R)-3-hydroxyacyl]-N-acetyl-alpha-D-glucosamine + holo-[ACP]. The protein operates within glycolipid biosynthesis; lipid IV(A) biosynthesis; lipid IV(A) from (3R)-3-hydroxytetradecanoyl-[acyl-carrier-protein] and UDP-N-acetyl-alpha-D-glucosamine: step 1/6. Its function is as follows. Involved in the biosynthesis of lipid A, a phosphorylated glycolipid that anchors the lipopolysaccharide to the outer membrane of the cell. This is Acyl-[acyl-carrier-protein]--UDP-N-acetylglucosamine O-acyltransferase from Agrobacterium fabrum (strain C58 / ATCC 33970) (Agrobacterium tumefaciens (strain C58)).